The sequence spans 98 residues: Integration host factor subunit alpha (98 aa).

Residues 49–71 form a disordered region; the sequence is FGNFDLRDKNQRPGRNPKTGEDI.

The protein belongs to the bacterial histone-like protein family. In terms of assembly, heterodimer of an alpha and a beta chain.

Functionally, this protein is one of the two subunits of integration host factor, a specific DNA-binding protein that functions in genetic recombination as well as in transcriptional and translational control. This chain is Integration host factor subunit alpha, found in Shewanella oneidensis (strain ATCC 700550 / JCM 31522 / CIP 106686 / LMG 19005 / NCIMB 14063 / MR-1).